Reading from the N-terminus, the 149-residue chain is Aquaporin-like protein 2 (149 aa).

The interval 1 to 35 is disordered; it reads MSNESNDLEKNISHLDPTGVDNAYIPPEQPETKHS. At 1-47 the chain is on the cytoplasmic side; it reads MSNESNDLEKNISHLDPTGVDNAYIPPEQPETKHSRFNIDRDTLRNH. The helical transmembrane segment at 48–68 threads the bilayer; the sequence is FIAAVGEFCGTFMFLWCAYVI. Over 69–89 the chain is Extracellular; sequence CNVANHDVALTTEPEGSHPGQ. Residues 90-110 traverse the membrane as a helical segment; the sequence is LIMIALGFGFSVMFSIWCFWW. Over 111–149 the chain is Cytoplasmic; the sequence is GFEPSRFSLFVFGQSHLSSQMCSDVVSSDHCWDGCWWCR.

It belongs to the MIP/aquaporin (TC 1.A.8) family.

The protein localises to the endoplasmic reticulum membrane. It localises to the cell membrane. Functionally, water channel required to facilitate the transport of water across membranes. Involved in freeze tolerance, osmotolerance and cell flocculation in liquid cultures. Is non-functional in most laboratory strains. The protein is Aquaporin-like protein 2 (AQY2-2) of Saccharomyces cerevisiae (strain RM11-1a) (Baker's yeast).